Reading from the N-terminus, the 164-residue chain is Phosphopantetheine adenylyltransferase (164 aa).

S9 is a binding site for substrate. Residues 9-10 (SF) and H17 contribute to the ATP site. 3 residues coordinate substrate: K41, T74, and R88. Residues 89–91 (GVR), E99, and 124–130 (NSFVASS) contribute to the ATP site.

It belongs to the bacterial CoaD family. As to quaternary structure, homohexamer. It depends on Mg(2+) as a cofactor.

It is found in the cytoplasm. The enzyme catalyses (R)-4'-phosphopantetheine + ATP + H(+) = 3'-dephospho-CoA + diphosphate. It functions in the pathway cofactor biosynthesis; coenzyme A biosynthesis; CoA from (R)-pantothenate: step 4/5. Its function is as follows. Reversibly transfers an adenylyl group from ATP to 4'-phosphopantetheine, yielding dephospho-CoA (dPCoA) and pyrophosphate. In Lactobacillus helveticus (strain DPC 4571), this protein is Phosphopantetheine adenylyltransferase.